The primary structure comprises 183 residues: Translation initiation factor IF-3 (183 aa).

Belongs to the IF-3 family. Monomer.

The protein localises to the cytoplasm. Functionally, IF-3 binds to the 30S ribosomal subunit and shifts the equilibrium between 70S ribosomes and their 50S and 30S subunits in favor of the free subunits, thus enhancing the availability of 30S subunits on which protein synthesis initiation begins. The chain is Translation initiation factor IF-3 from Pseudomonas syringae pv. tomato (strain ATCC BAA-871 / DC3000).